A 102-amino-acid polypeptide reads, in one-letter code: Large ribosomal subunit protein bL21 (102 aa).

The protein belongs to the bacterial ribosomal protein bL21 family. In terms of assembly, part of the 50S ribosomal subunit. Contacts protein L20.

Functionally, this protein binds to 23S rRNA in the presence of protein L20. The sequence is that of Large ribosomal subunit protein bL21 from Geobacter sp. (strain M21).